The sequence spans 124 residues: uncharacterized protein (124 aa).

Belongs to the asfivirus H124R family.

It is found in the virion. This is an uncharacterized protein from Ornithodoros (relapsing fever ticks).